Consider the following 85-residue polypeptide: Large ribosomal subunit protein uL23 (85 aa).

This sequence belongs to the universal ribosomal protein uL23 family. Part of the 50S ribosomal subunit. Interacts with protein L29 and weakly with protein L39e.

In terms of biological role, binds to a specific region on the 23S rRNA. Located at the polypeptide exit tunnel on the outside of the subunit. This Haloarcula marismortui (strain ATCC 43049 / DSM 3752 / JCM 8966 / VKM B-1809) (Halobacterium marismortui) protein is Large ribosomal subunit protein uL23.